Reading from the N-terminus, the 427-residue chain is UDP-N-acetylglucosamine 1-carboxyvinyltransferase (427 aa).

22 to 23 (KN) contributes to the phosphoenolpyruvate binding site. Position 99 (R99) interacts with UDP-N-acetyl-alpha-D-glucosamine. Residue C123 is the Proton donor of the active site. C123 carries the 2-(S-cysteinyl)pyruvic acid O-phosphothioketal modification. UDP-N-acetyl-alpha-D-glucosamine is bound by residues 128–132 (RPIDL), D313, and I335.

Belongs to the EPSP synthase family. MurA subfamily.

The protein localises to the cytoplasm. It carries out the reaction phosphoenolpyruvate + UDP-N-acetyl-alpha-D-glucosamine = UDP-N-acetyl-3-O-(1-carboxyvinyl)-alpha-D-glucosamine + phosphate. It participates in cell wall biogenesis; peptidoglycan biosynthesis. Its function is as follows. Cell wall formation. Adds enolpyruvyl to UDP-N-acetylglucosamine. This is UDP-N-acetylglucosamine 1-carboxyvinyltransferase from Sphingopyxis alaskensis (strain DSM 13593 / LMG 18877 / RB2256) (Sphingomonas alaskensis).